A 367-amino-acid chain; its full sequence is MIDILNLTYDELEAWMTGTLGEPRFRARQVWQWLWQKNARSFDAMTNVSKATRARLAEAARITWPEVRTVKTSSDGTVKFLLALADGALVETVLIPSESREGKVRMTQCLSCQVGCAMGCTFCSTGSMGFERNMTMAEILGQVLVAREHLGDDRPDHPIVRNLVFMGMGEPLLNLNEVMRSLRTLNDEFGLCFSPRRITVSTCGIEKGLRELGESGLAFLAVSLHAPNQEVRARIMPRAARWTLDDLMAALESYPLKTRERITFEYLLLGGVNDSIDHARELVRLVSRTKAKLNLIVYNPAEGLPYEAPSQARILAFEQYLWSKNVTAIIRKSKGQDIKAACGQLKASELAELAGMAVTEEPKKEAE.

The active-site Proton acceptor is the glutamate 91. Positions 102-337 (GKVRMTQCLS…AIIRKSKGQD (236 aa)) constitute a Radical SAM core domain. An intrachain disulfide couples cysteine 109 to cysteine 342. Positions 116, 120, and 123 each coordinate [4Fe-4S] cluster. S-adenosyl-L-methionine contacts are provided by residues 169-170 (GE), serine 201, 223-225 (SLH), and asparagine 299. Residue cysteine 342 is the S-methylcysteine intermediate of the active site.

This sequence belongs to the radical SAM superfamily. RlmN family. Requires [4Fe-4S] cluster as cofactor.

The protein localises to the cytoplasm. It catalyses the reaction adenosine(2503) in 23S rRNA + 2 reduced [2Fe-2S]-[ferredoxin] + 2 S-adenosyl-L-methionine = 2-methyladenosine(2503) in 23S rRNA + 5'-deoxyadenosine + L-methionine + 2 oxidized [2Fe-2S]-[ferredoxin] + S-adenosyl-L-homocysteine. The enzyme catalyses adenosine(37) in tRNA + 2 reduced [2Fe-2S]-[ferredoxin] + 2 S-adenosyl-L-methionine = 2-methyladenosine(37) in tRNA + 5'-deoxyadenosine + L-methionine + 2 oxidized [2Fe-2S]-[ferredoxin] + S-adenosyl-L-homocysteine. Specifically methylates position 2 of adenine 2503 in 23S rRNA and position 2 of adenine 37 in tRNAs. m2A2503 modification seems to play a crucial role in the proofreading step occurring at the peptidyl transferase center and thus would serve to optimize ribosomal fidelity. In Nitratidesulfovibrio vulgaris (strain DSM 19637 / Miyazaki F) (Desulfovibrio vulgaris), this protein is Dual-specificity RNA methyltransferase RlmN.